The sequence spans 879 residues: Phosphoenolpyruvate carboxylase (879 aa).

Catalysis depends on residues His137 and Lys545.

It belongs to the PEPCase type 1 family. Mg(2+) is required as a cofactor.

The catalysed reaction is oxaloacetate + phosphate = phosphoenolpyruvate + hydrogencarbonate. Its function is as follows. Forms oxaloacetate, a four-carbon dicarboxylic acid source for the tricarboxylic acid cycle. This Yersinia enterocolitica serotype O:8 / biotype 1B (strain NCTC 13174 / 8081) protein is Phosphoenolpyruvate carboxylase.